We begin with the raw amino-acid sequence, 832 residues long: Regulator of drug sensitivity 1 (832 aa).

The segment at residues 15–42 (CLQCKKIKRKCDKLRPACSRCQQNSLQC) is a DNA-binding region (zn(2)-C6 fungal-type).

The protein resides in the nucleus. Zinc cluster transcription factor involved in resistance to cycloheximide. The polypeptide is Regulator of drug sensitivity 1 (RDS1) (Saccharomyces cerevisiae (strain ATCC 204508 / S288c) (Baker's yeast)).